The chain runs to 422 residues: Nuclear hormone receptor family member nhr-54 (422 aa).

The nuclear receptor DNA-binding region spans 14 to 92 (SVKCAICYKA…LGMTTENVRT (79 aa)). 2 consecutive NR C4-type zinc fingers follow at residues 17–37 (CAIC…CRAC) and 53–80 (CTRK…FKKC). Positions 161–422 (PDDDVIVELN…VFTEPEFFRV (262 aa)) constitute an NR LBD domain.

The protein belongs to the nuclear hormone receptor family.

It is found in the nucleus. Its function is as follows. Orphan nuclear receptor. The protein is Nuclear hormone receptor family member nhr-54 (nhr-54) of Caenorhabditis elegans.